A 266-amino-acid polypeptide reads, in one-letter code: Large ribosomal subunit protein eL8 (266 aa).

A compositionally biased stretch (basic and acidic residues) spans 104 to 130; the sequence is PETKQEKKQRLLARAEQKAAGKGDTPT. The interval 104–135 is disordered; the sequence is PETKQEKKQRLLARAEQKAAGKGDTPTKRPPV.

Belongs to the eukaryotic ribosomal protein eL8 family. Component of the large ribosomal subunit.

It localises to the cytoplasm. Its function is as follows. Component of the large ribosomal subunit. The ribosome is a large ribonucleoprotein complex responsible for the synthesis of proteins in the cell. The chain is Large ribosomal subunit protein eL8 (RPL7A) from Gallus gallus (Chicken).